The following is a 408-amino-acid chain: MKITDAKVFVGGPGKNYVTVKVMTDSGVYGLGDATLNNRETLPAKYLTDYLVPNLIGMDPRRSEDIWQFLYRGAYFRRGPVAMAAFGAIDMALWDIKGKLADMPLYQLFGGKSRDGAMVYGHATGADLEDLMDSIAHYVEQGYKAVRVQCGIPGMPTASYAVPEERGASKHYISDFSGIRPKTEIWDSGKYLRWMPGALMAIRERFGPDLHILHDVHHRLTPREAAQFAKAVEPVDLYWLEDPTPAEDQAALRLVRQHSTTPIAIGEVFNSIWECNKLIEEELIDFIRVAATYAGGITHVKRIVDLAGLHHVRTGFHGAPSHSPLCMAAHAHLNAWAPNFGIQEYLVLGTPDCDALFPSDHRMEDGMVHVSDAPGLGVDFDEAEAARYEYRPGSHPVVRLTDGTMWDY.

Position 215 (D215) interacts with Mg(2+). H217 serves as a coordination point for D-arabinonate. Residues E241 and E267 each contribute to the Mg(2+) site. E267, R288, H317, and E344 together coordinate D-arabinonate.

It belongs to the mandelate racemase/muconate lactonizing enzyme family. GalD subfamily.

In terms of biological role, has no detectable activity with D-mannonate and with a panel of 70 other acid sugars (in vitro), in spite of the conservation of the residues that are expected to be important for catalytic activity and cofactor binding. May have evolved a divergent function. This chain is D-galactonate dehydratase family member OG2516_05608, found in Oceanicola granulosus (strain ATCC BAA-861 / DSM 15982 / KCTC 12143 / HTCC2516).